Reading from the N-terminus, the 884-residue chain is Kinesin-like protein KIN-7C (884 aa).

Residues 33 to 355 (RIQVLVRLRP…LLFGSCAKEV (323 aa)) form the Kinesin motor domain. An ATP-binding site is contributed by 119-126 (GQTSSGKT). A coiled-coil region spans residues 364–435 (VMSDKALVKH…LQDLLQSVGD (72 aa)). The disordered stretch occupies residues 434–530 (GDHDLNRQVQ…VNSRHSRPSG (97 aa)). Positions 449 to 460 (RSPPSVGMPPSV) are enriched in low complexity. Positions 461-483 (SRDDSSQVSHDDSDLYKEVRCIE) are enriched in basic and acidic residues. A compositionally biased stretch (polar residues) spans 498–523 (GESSSPQDSNMNSGLHGNDSNASVNS).

It belongs to the TRAFAC class myosin-kinesin ATPase superfamily. Kinesin family. KIN-7 subfamily.

The chain is Kinesin-like protein KIN-7C from Oryza sativa subsp. japonica (Rice).